The following is a 147-amino-acid chain: Putative protein adenylyltransferase MJ1305 (147 aa).

The GSX(10)DXD motif signature appears at 32-46 (GSYARGTAVEYSDVD). Residues aspartate 44 and aspartate 46 each coordinate Mg(2+).

The protein belongs to the MntA antitoxin family. Requires Mg(2+) as cofactor.

The catalysed reaction is L-tyrosyl-[protein] + ATP = O-(5'-adenylyl)-L-tyrosyl-[protein] + diphosphate. It catalyses the reaction O-(5'-adenylyl)-L-tyrosyl-[protein] + ATP = O-[5'-(adenylyl-(5'-&gt;3')-adenylyl)]-L-tyrosyl-[protein] + diphosphate. Putative antitoxin component of a putative type VII toxin-antitoxin (TA) system. Its cognate toxin might be MJ1304, which it might AMPylate. This is Putative protein adenylyltransferase MJ1305 from Methanocaldococcus jannaschii (strain ATCC 43067 / DSM 2661 / JAL-1 / JCM 10045 / NBRC 100440) (Methanococcus jannaschii).